Here is a 110-residue protein sequence, read N- to C-terminus: Phosphoribosyl-ATP pyrophosphatase (110 aa).

It belongs to the PRA-PH family.

The protein resides in the cytoplasm. It carries out the reaction 1-(5-phospho-beta-D-ribosyl)-ATP + H2O = 1-(5-phospho-beta-D-ribosyl)-5'-AMP + diphosphate + H(+). It functions in the pathway amino-acid biosynthesis; L-histidine biosynthesis; L-histidine from 5-phospho-alpha-D-ribose 1-diphosphate: step 2/9. In Pseudomonas syringae pv. tomato (strain ATCC BAA-871 / DC3000), this protein is Phosphoribosyl-ATP pyrophosphatase.